Here is a 117-residue protein sequence, read N- to C-terminus: Envelope glycoprotein J (117 aa).

The first 26 residues, 1 to 26 (MRSLLFVVGAWVAAAVTHLTPNAALA), serve as a signal peptide directing secretion. Residues 26–64 (ATGTTPTVGANSTADPGTGANGTTVPAAGTPANSTTAAE) form a disordered region. Residues 27–40 (TGTTPTVGANSTAD) are compositionally biased toward polar residues. At 27–73 (TGTTPTVGANSTADPGTGANGTTVPAAGTPANSTTAAETPAPFPPVD) the chain is on the extracellular side. Asn-36, Asn-46, and Asn-58 each carry an N-linked (GlcNAc...) asparagine; by host glycan. A helical membrane pass occupies residues 74–94 (FALPVVIGGLCALTLAAMGAG). The Cytoplasmic segment spans residues 95-117 (ALLHRCCRRAAARRRQRAAYVYA).

Belongs to the alphaherpesvirinae glycoprotein J family.

The protein localises to the host Golgi apparatus membrane. The protein resides in the host endoplasmic reticulum membrane. It is found in the host endosome membrane. In terms of biological role, inhibits host cell apoptosis. Induces an increase in reactive oxygen species (ROS) in the host cell. The sequence is that of Envelope glycoprotein J (gJ) from Homo sapiens (Human).